Consider the following 333-residue polypeptide: L-lactate dehydrogenase B chain (333 aa).

Residues 29 to 57 and R99 each bind NAD(+); that span reads GQVG…WEDK. R106, N138, and R169 together coordinate substrate. N138 contributes to the NAD(+) binding site. H193 (proton acceptor) is an active-site residue. T248 is a substrate binding site.

This sequence belongs to the LDH/MDH superfamily. LDH family. As to quaternary structure, homotetramer.

It is found in the cytoplasm. The enzyme catalyses (S)-lactate + NAD(+) = pyruvate + NADH + H(+). Its pathway is fermentation; pyruvate fermentation to lactate; (S)-lactate from pyruvate: step 1/1. In terms of biological role, interconverts simultaneously and stereospecifically pyruvate and lactate with concomitant interconversion of NADH and NAD(+). The polypeptide is L-lactate dehydrogenase B chain (LDHB) (Alligator mississippiensis (American alligator)).